The sequence spans 523 residues: Polypyrimidine tract-binding protein 3 (523 aa).

Residues 1-25 (MNNSTSAGVYANGNDNKKFKGDRPP) are disordered. RRM domains are found at residues 30–114 (RVLH…NLPN), 153–229 (LRII…FSKL), and 329–403 (SVLL…LSKH). A Glycyl lysine isopeptide (Lys-Gly) (interchain with G-Cter in SUMO2) cross-link involves residue Lys-36. The residue at position 98 (Tyr-98) is a Phosphotyrosine. Thr-109 is subject to Phosphothreonine. A Glycyl lysine isopeptide (Lys-Gly) (interchain with G-Cter in SUMO2) cross-link involves residue Lys-187. Residue Lys-394 is modified to N6-acetyllysine. A disordered region spans residues 406-426 (VQLPREGQEDQGLTKDFSNSP). Ser-425 is subject to Phosphoserine. An RRM 4 domain is found at 446–521 (ATLHLSNIPP…HHLRVSFSKS (76 aa)).

As to quaternary structure, interacts with THBS4 (via the acidic amphipathic C-terminus). As to expression, detected specifically in spleen, thymus, lungs, and bone marrow.

RNA-binding protein that mediates pre-mRNA alternative splicing regulation. Plays a role in the regulation of cell proliferation, differentiation and migration. Positive regulator of EPO-dependent erythropoiesis. Participates in cell differentiation regulation by repressing tissue-specific exons. Promotes Fas exon 6 skipping. Binds RNA, preferentially to both poly(G) and poly(U). This is Polypyrimidine tract-binding protein 3 (Ptbp3) from Rattus norvegicus (Rat).